The following is a 397-amino-acid chain: UDP-GlcNAc:betaGal beta-1,3-N-acetylglucosaminyltransferase 7 (397 aa).

At 1–6 (MSLWKK) the chain is on the cytoplasmic side. The chain crosses the membrane as a helical; Signal-anchor for type II membrane protein span at residues 7–26 (TLYKSVCLALALLVAVTVFQ). Residues 27–397 (RSVTPGQFLQ…LTCSLKFQVL (371 aa)) lie on the Lumenal side of the membrane. Residues Asn84, Asn90, Asn210, and Asn387 are each glycosylated (N-linked (GlcNAc...) asparagine).

It belongs to the glycosyltransferase 31 family.

It is found in the golgi apparatus membrane. It participates in protein modification; protein glycosylation. N-acetyl glucosamine (GlcNAc) transferase that catalyzes the transfer of GlcNAc via a beta1-&gt;3 linkage from UDP-GlcNAc to the non-reducing terminal galactose (Gal) in the linearly growing chain of N- and O-linked keratan sulfate proteoglycans. Cooperates with B4GALT4 galactosyltransferase and CHST6 and CHST1 sulfotransferases to construct and elongate mono- and disulfated disaccharide units [-&gt;3Galbeta1-&gt;4(6-sulfoGlcNAcbeta)1-&gt;] and [-&gt;3(6-sulfoGalbeta)1-&gt;4(6-sulfoGlcNAcbeta)1-&gt;] within keratan sulfate polymer. Involved in biosynthesis of N-linked keratan sulfate proteoglycans in cornea, with an impact on proteoglycan fibril organization and corneal transparency. May play a role in the maintenance of tissue architecture by suppressing cellular motility and invasion. The chain is UDP-GlcNAc:betaGal beta-1,3-N-acetylglucosaminyltransferase 7 (B3gnt7) from Rattus norvegicus (Rat).